The primary structure comprises 122 residues: Large ribosomal subunit protein uL14 (122 aa).

It belongs to the universal ribosomal protein uL14 family. Part of the 50S ribosomal subunit. Forms a cluster with proteins L3 and L19. In the 70S ribosome, L14 and L19 interact and together make contacts with the 16S rRNA in bridges B5 and B8.

Its function is as follows. Binds to 23S rRNA. Forms part of two intersubunit bridges in the 70S ribosome. The protein is Large ribosomal subunit protein uL14 of Thermomicrobium roseum (strain ATCC 27502 / DSM 5159 / P-2).